The chain runs to 102 residues: Large ribosomal subunit protein bL21 (102 aa).

The protein belongs to the bacterial ribosomal protein bL21 family. As to quaternary structure, part of the 50S ribosomal subunit. Contacts protein L20.

Functionally, this protein binds to 23S rRNA in the presence of protein L20. This chain is Large ribosomal subunit protein bL21, found in Campylobacter lari (strain RM2100 / D67 / ATCC BAA-1060).